A 145-amino-acid chain; its full sequence is AP-2 complex subunit sigma (145 aa).

It belongs to the adaptor complexes small subunit family. Adaptor protein complex 2 (AP-2) is a heterotetramer composed of two large adaptins (alpha-type subunit apl3 and beta-type subunit apl1), a medium chain (mu-type subunit apm4) and a small adaptin (sigma-type subunit aps2).

The protein resides in the cell membrane. Its subcellular location is the membrane. It is found in the coated pit. Functionally, component of the adaptor complexes which link clathrin to receptors in coated vesicles. Clathrin-associated protein complexes are believed to interact with the cytoplasmic tails of membrane proteins, leading to their selection and concentration. This chain is AP-2 complex subunit sigma (aps2), found in Aspergillus fumigatus (strain ATCC MYA-4609 / CBS 101355 / FGSC A1100 / Af293) (Neosartorya fumigata).